The primary structure comprises 731 residues: Alpha-catulin (731 aa).

Ser373 and Ser537 each carry phosphoserine. Residues 535–559 are disordered; sequence HLSLPKPTKNSANLKSLKPDKPDSE.

Belongs to the vinculin/alpha-catenin family. In terms of assembly, interacts with ARHGEF1. Interacts with Dtna. The interaction is required for correct localization of both Ctnnal1 and Dtna.

It localises to the cytoplasm. It is found in the cytoskeleton. The protein resides in the cell membrane. Functionally, may modulate the Rho pathway signaling by providing a scaffold for the Lbc Rho guanine nucleotide exchange factor (ARHGEF1). This chain is Alpha-catulin (Ctnnal1), found in Mus musculus (Mouse).